The chain runs to 159 residues: Protransforming growth factor alpha (159 aa).

A signal peptide spans 1–23; the sequence is MVPATGQLALLALGILLAVCQAL. Positions 24–38 are cleaved as a propeptide — removed in mature form; sequence ENSTSPLSDSPVAAA. At 24–97 the chain is on the extracellular side; the sequence is ENSTSPLSDS…AVVAASQKKQ (74 aa). Asn-25 carries an N-linked (GlcNAc...) asparagine glycan. The region spanning 44–83 is the EGF-like domain; it reads NKCPDSHTQYCFHGTCRFLVQEEKPACVCHSGYVGVRCEH. Cystine bridges form between Cys-46/Cys-59, Cys-54/Cys-70, and Cys-72/Cys-81. Residues 89 to 159 constitute a propeptide, removed in mature form; the sequence is VVAASQKKQA…TACCHSETVV (71 aa). The helical transmembrane segment at 98 to 123 threads the bilayer; that stretch reads AITALVVVSIVALAVLIITCVLIHCC. At 124–159 the chain is on the cytoplasmic side; it reads QLRKHCEWCRALVCRHEKPSALLKGRTACCHSETVV. S-palmitoyl cysteine attachment occurs at residues Cys-152 and Cys-153.

Interacts with the PDZ domains of SDCBP and SNTA1. The interaction with SDCBP, is required for the targeting to the cell surface. In the endoplasmic reticulum, in its immature form (i.e. with a prosegment and lacking full N-glycosylation), interacts with CNIH. In the Golgi apparatus, may form a complex with CNIH and GORASP2. Interacts (via cytoplasmic C-terminal domain) with NKD2. Interacts with MAGI3.

It localises to the secreted. Its subcellular location is the extracellular space. It is found in the cell membrane. In terms of biological role, TGF alpha is a mitogenic polypeptide that is able to bind to the EGF receptor/EGFR and to act synergistically with TGF beta to promote anchorage-independent cell proliferation in soft agar. The sequence is that of Protransforming growth factor alpha (Tgfa) from Mus musculus (Mouse).